Reading from the N-terminus, the 1841-residue chain is Sucrase-isomaltase, intestinal (1841 aa).

Over 1 to 12 (MAKKKFSALEIS) the chain is Cytoplasmic. Ser7 carries the post-translational modification Phosphoserine; by PKA. Residues 13 to 32 (LIVLFIIVTAIAIALVTVLA) traverse the membrane as a helical; Signal-anchor for type II membrane protein segment. The Lumenal segment spans residues 33–1841 (TKVPAVEEIK…LDEPIQITWS (1809 aa)). Residues 42-81 (KSPTPTSNSTPTSTPTSTSTPTSTSTPSPGKCPPEQGEPI) form a disordered region. A compositionally biased stretch (low complexity) spans 43 to 70 (SPTPTSNSTPTSTPTSTSTPTSTSTPSP). Residues 71-120 (GKCPPEQGEPINERINCIPEQHPTKAICEERGCCWRPWNNTVIPWCFFAD) enclose the P-type 1 domain. Cystine bridges form between Cys73-Cys104, Cys87-Cys103, and Cys98-Cys116. N-linked (GlcNAc...) asparagine glycosylation occurs at Asn109. The tract at residues 120-1013 (DNHGYNAESI…ELQLNPPNAR (894 aa)) is isomaltase. The substrate site is built by Asp274 and Asp398. A sulfotyrosine mark is found at Tyr401 and Tyr410. N-linked (GlcNAc...) asparagine glycosylation occurs at Asn464. Catalysis depends on Asp514, which acts as the Nucleophile; for isomaltase activity. Arg599 is a substrate binding site. Asp615 serves as the catalytic For isomaltase activity. Cys646 and Cys657 are disulfide-bonded. His673 lines the substrate pocket. 4 N-linked (GlcNAc...) asparagine glycosylation sites follow: Asn758, Asn765, Asn867, and Asn910. The region spanning 936 to 984 (RWCRTFSDNEKFTCYPDVGTATEGTCTQRGCLWQPVSGLSNVPPYYFPP) is the P-type 2 domain. The tract at residues 1014–1841 (IKLPSNPIST…LDEPIQITWS (828 aa)) is sucrase. Asn1240, Asn1308, Asn1345, Asn1359, and Asn1373 each carry an N-linked (GlcNAc...) asparagine glycan. Tyr1387 carries the sulfotyrosine modification. The active-site Nucleophile; for sucrase activity is Asp1399. The active-site For sucrase activity is the Glu1402. N-linked (GlcNAc...) asparagine glycosylation is present at Asn1485. Asp1512 (proton donor; for sucrase activity) is an active-site residue. Residues Asn1513, Asn1575, Asn1762, and Asn1829 are each glycosylated (N-linked (GlcNAc...) asparagine).

Belongs to the glycosyl hydrolase 31 family. As to quaternary structure, the resulting sucrase and isomaltase subunits stay associated with one another in a complex by non-covalent linkages. The precursor is proteolytically cleaved when exposed to pancreatic proteases in the intestinal lumen. Post-translationally, sulfated.

It localises to the apical cell membrane. It carries out the reaction Hydrolysis of sucrose and maltose by an alpha-D-glucosidase-type action.. The catalysed reaction is Hydrolysis of (1-&gt;6)-alpha-D-glucosidic linkages in some oligosaccharides produced from starch and glycogen by alpha-amylase, and in isomaltose.. Its function is as follows. Plays an important role in the final stage of carbohydrate digestion. Isomaltase activity is specific for both alpha-1,4- and alpha-1,6-oligosaccharides. This is Sucrase-isomaltase, intestinal (Si) from Rattus norvegicus (Rat).